The primary structure comprises 780 residues: Pentatricopeptide repeat-containing protein At1g79540 (780 aa).

PPR repeat units follow at residues 91–125, 126–160, 161–196, 197–231, 232–266, 267–301, 302–336, 337–371, 372–406, 407–441, 442–476, 481–515, 516–550, 551–585, 653–687, 688–722, and 723–758; these read SRES…GVSV, DSYC…DCRP, DVFT…NCSP, NLYT…GISP, NRVT…GNYP, DSVA…GFVL, GLRG…NIKP, DIIL…GISP, DTYC…ESFP, DACT…GCSP, SVAT…RPAS, LSHS…GSSP, DIVS…GLSP, DSVT…RHSP, TLGP…KILV, TPPS…NFKL, and MPRV…GYNV.

The protein belongs to the PPR family. P subfamily.

In Arabidopsis thaliana (Mouse-ear cress), this protein is Pentatricopeptide repeat-containing protein At1g79540.